The chain runs to 112 residues: MTGKTVTRADLAESVFRKVGLSRTESAELVETVIDEVCNAIVRGETVKLSSFATFQVRDKNERIGRNPKTGEEVPISPRRVMTFKASNVLKTRILKAHVARKVKLKPQNPAS.

It belongs to the bacterial histone-like protein family. Heterodimer of an alpha and a beta chain.

This protein is one of the two subunits of integration host factor, a specific DNA-binding protein that functions in genetic recombination as well as in transcriptional and translational control. The protein is Integration host factor subunit alpha of Rhizobium leguminosarum bv. trifolii (strain WSM2304).